The sequence spans 488 residues: DNA polymerase II small subunit (488 aa).

It belongs to the DNA polymerase delta/II small subunit family. As to quaternary structure, heterodimer of a large subunit and a small subunit.

The catalysed reaction is DNA(n) + a 2'-deoxyribonucleoside 5'-triphosphate = DNA(n+1) + diphosphate. It carries out the reaction Exonucleolytic cleavage in the 3'- to 5'-direction to yield nucleoside 5'-phosphates.. Its function is as follows. Possesses two activities: a DNA synthesis (polymerase) and an exonucleolytic activity that degrades single-stranded DNA in the 3' to 5' direction. Has a template-primer preference which is characteristic of a replicative DNA polymerase. In Thermoplasma acidophilum (strain ATCC 25905 / DSM 1728 / JCM 9062 / NBRC 15155 / AMRC-C165), this protein is DNA polymerase II small subunit (polB).